Here is a 378-residue protein sequence, read N- to C-terminus: Cytochrome b (378 aa).

Transmembrane regions (helical) follow at residues 34–54 (FGSLLGLCLIIQILTGLFLAM), 78–99 (WLLRTLHANGASFFFICIYLHV), 114–134 (WLIGVIILFLVMGTAFMGYVL), and 179–199 (FFTFHFILPFIVLAMTMIHLL). H84 and H98 together coordinate heme b. Positions 183 and 197 each coordinate heme b. Residue H202 participates in a ubiquinone binding. The next 4 membrane-spanning stretches (helical) occupy residues 227–247 (FKDIVGFIVMIFILISLVLIS), 289–309 (LGGVIALVLSIAILMILPFYN), 321–341 (INQVMFWSMLVTVILLTWIGA), and 348–368 (YVLIGQILTVVYFLYYLVNPL).

This sequence belongs to the cytochrome b family. As to quaternary structure, the main subunits of complex b-c1 are: cytochrome b, cytochrome c1 and the Rieske protein. Requires heme b as cofactor.

The protein resides in the mitochondrion inner membrane. Component of the ubiquinol-cytochrome c reductase complex (complex III or cytochrome b-c1 complex) that is part of the mitochondrial respiratory chain. The b-c1 complex mediates electron transfer from ubiquinol to cytochrome c. Contributes to the generation of a proton gradient across the mitochondrial membrane that is then used for ATP synthesis. The sequence is that of Cytochrome b (mt:Cyt-b) from Drosophila simulans (Fruit fly).